The primary structure comprises 349 residues: Green-sensitive opsin-2 (349 aa).

Residues 1-36 lie on the Extracellular side of the membrane; sequence MNGTEGNNFYVPLSNRTGLVRSPFEYPQYYLAEPWQ. Asparagine 2 and asparagine 15 each carry an N-linked (GlcNAc...) asparagine glycan. The helical transmembrane segment at 37 to 61 threads the bilayer; that stretch reads FKLLAVYMFFLICLGLPINGLTLIC. Residues 62-73 are Cytoplasmic-facing; the sequence is TAQHKKLRQPLN. A helical membrane pass occupies residues 74–99; that stretch reads FILVNLAVAGAIMVCFGFTVTFYTAI. Topologically, residues 100-113 are extracellular; it reads NGYFALGPTGCAVE. A disulfide bond links cysteine 110 and cysteine 187. The chain crosses the membrane as a helical span at residues 114–133; sequence GFMATLGGEVALWSLVVLAI. The Cytoplasmic portion of the chain corresponds to 134–152; it reads ERYIVVCKPMGSFKFSSTH. The helical transmembrane segment at 153-176 threads the bilayer; sequence ASAGIAFTWVMAMACAAPPLVGWS. The Extracellular portion of the chain corresponds to 177–202; it reads RYIPEGIQCSCGPDYYTLNPEYNNES. The helical transmembrane segment at 203 to 230 threads the bilayer; sequence YVLYMFICHFILPVTIIFFTYGRLVCTV. The Cytoplasmic segment spans residues 231-252; that stretch reads KAAAAQQQDSASTQKAEREVTK. A helical transmembrane segment spans residues 253–276; sequence MVILMVLGFLVAWTPYATVAAWIF. At 277-284 the chain is on the extracellular side; that stretch reads FNKGAAFS. The chain crosses the membrane as a helical span at residues 285-309; it reads AQFMAIPAFFSKTSALYNPVIYVLL. Lysine 296 is subject to N6-(retinylidene)lysine. Over 310–349 the chain is Cytoplasmic; the sequence is NKQFRSCMLTTLFCGKNPLGDEESSTVSTSKTEVSSVSPA. Residues 329–349 form a disordered region; sequence GDEESSTVSTSKTEVSSVSPA. Residues 334-349 show a composition bias toward low complexity; it reads STVSTSKTEVSSVSPA.

It belongs to the G-protein coupled receptor 1 family. Opsin subfamily. Phosphorylated on some or all of the serine and threonine residues present in the C-terminal region. The color pigments are found in the cone photoreceptor cells.

It is found in the membrane. In terms of biological role, visual pigments are the light-absorbing molecules that mediate vision. They consist of an apoprotein, opsin, covalently linked to cis-retinal. The protein is Green-sensitive opsin-2 of Carassius auratus (Goldfish).